The primary structure comprises 240 residues: Purine nucleoside phosphorylase RP494 (240 aa).

Zn(2+) contacts are provided by His60, Cys96, and His113.

Belongs to the purine nucleoside phosphorylase YfiH/LACC1 family. As to quaternary structure, homodimer. It depends on Cu(2+) as a cofactor. The cofactor is Zn(2+).

It carries out the reaction adenosine + phosphate = alpha-D-ribose 1-phosphate + adenine. It catalyses the reaction S-methyl-5'-thioadenosine + phosphate = 5-(methylsulfanyl)-alpha-D-ribose 1-phosphate + adenine. The catalysed reaction is inosine + phosphate = alpha-D-ribose 1-phosphate + hypoxanthine. The enzyme catalyses adenosine + H2O + H(+) = inosine + NH4(+). Functionally, purine nucleoside enzyme that catalyzes the phosphorolysis of adenosine and inosine nucleosides, yielding D-ribose 1-phosphate and the respective free bases, adenine and hypoxanthine. Also catalyzes the phosphorolysis of S-methyl-5'-thioadenosine into adenine and S-methyl-5-thio-alpha-D-ribose 1-phosphate. Also has adenosine deaminase activity. This is Purine nucleoside phosphorylase RP494 from Rickettsia prowazekii (strain Madrid E).